Consider the following 388-residue polypeptide: Xylose isomerase (388 aa).

Residues His54 and Asp57 contribute to the active site. Glu181, Glu217, His220, Asp245, Asp255, Asp257, and Asp287 together coordinate Mg(2+).

Belongs to the xylose isomerase family. As to quaternary structure, homotetramer. Requires Mg(2+) as cofactor.

Its subcellular location is the cytoplasm. It carries out the reaction alpha-D-xylose = alpha-D-xylulofuranose. This Streptomyces corchorusii (Streptomyces chibaensis) protein is Xylose isomerase.